An 82-amino-acid chain; its full sequence is ATP synthase subunit c (82 aa).

2 consecutive transmembrane segments (helical) span residues 6–26 and 49–69; these read LGLT…GCGI and IMVT…YALV.

Belongs to the ATPase C chain family. F-type ATPases have 2 components, F(1) - the catalytic core - and F(0) - the membrane proton channel. F(1) has five subunits: alpha(3), beta(3), gamma(1), delta(1), epsilon(1). F(0) has three main subunits: a(1), b(2) and c(10-14). The alpha and beta chains form an alternating ring which encloses part of the gamma chain. F(1) is attached to F(0) by a central stalk formed by the gamma and epsilon chains, while a peripheral stalk is formed by the delta and b chains.

The protein resides in the cell inner membrane. In terms of biological role, f(1)F(0) ATP synthase produces ATP from ADP in the presence of a proton or sodium gradient. F-type ATPases consist of two structural domains, F(1) containing the extramembraneous catalytic core and F(0) containing the membrane proton channel, linked together by a central stalk and a peripheral stalk. During catalysis, ATP synthesis in the catalytic domain of F(1) is coupled via a rotary mechanism of the central stalk subunits to proton translocation. Key component of the F(0) channel; it plays a direct role in translocation across the membrane. A homomeric c-ring of between 10-14 subunits forms the central stalk rotor element with the F(1) delta and epsilon subunits. This is ATP synthase subunit c from Nitratidesulfovibrio vulgaris (strain ATCC 29579 / DSM 644 / CCUG 34227 / NCIMB 8303 / VKM B-1760 / Hildenborough) (Desulfovibrio vulgaris).